Consider the following 379-residue polypeptide: Alanine racemase (379 aa).

Lys35 serves as the catalytic Proton acceptor; specific for D-alanine. Lys35 bears the N6-(pyridoxal phosphate)lysine mark. Arg133 lines the substrate pocket. Tyr265 (proton acceptor; specific for L-alanine) is an active-site residue. Met312 is a substrate binding site.

It belongs to the alanine racemase family. Requires pyridoxal 5'-phosphate as cofactor.

The enzyme catalyses L-alanine = D-alanine. It functions in the pathway amino-acid biosynthesis; D-alanine biosynthesis; D-alanine from L-alanine: step 1/1. In terms of biological role, catalyzes the interconversion of L-alanine and D-alanine. May also act on other amino acids. The polypeptide is Alanine racemase (alr) (Treponema denticola (strain ATCC 35405 / DSM 14222 / CIP 103919 / JCM 8153 / KCTC 15104)).